We begin with the raw amino-acid sequence, 528 residues long: MEPKLLLSAHKPLFVSCNSPFNEKTKLSVKSGLPMSTIRAARSQFMGEGLILGNKYGFWSTSRKTRVVVEPVRAAVKRRKELTFDSVVQRDKKLKLVLNIRKILVSQPDRMMSLRGLGKYRRDLGLKKRRRFIALLRKYPGVFEIVEEGAYSLRFKMTSEAERLYLDEMRIRNELEDVLVVKLRKLVMMSIDKRILLEKISHLKTDLGLPLEFRDTICQRYPQYFRVVPTPRGPALELTHWDPELAVSAAELSEDDNRTRESEERNLIIDRPPKFNRVKLPRGLNLSKSETRKISQFRDMQYISPYKDFSHLRSGTLEKEKHACGVIHELLSLTTEKRTLVDHLTHFREEFRFSQQLRGMLIRHPDLFYVSLKGERDSVFLREAYRNSELIDKDPLTLVKEKMRALVSVPRFPRRGGPRKDEEGREVEIDGSDADGEEEEEESDAEEWSDVDGYLEGEDGGNDDDGDWTDDEGEEDVPPNFDDDDEDEEEDSVKIGLSPSSRKSSSPRKKEEKVLTPVFPDGTPREKW.

Residues 1-73 (MEPKLLLSAH…KTRVVVEPVR (73 aa)) constitute a chloroplast transit peptide. In terms of domain architecture, PORR spans 80–408 (KELTFDSVVQ…VKEKMRALVS (329 aa)). A disordered region spans residues 410–528 (PRFPRRGGPR…FPDGTPREKW (119 aa)). Basic and acidic residues predominate over residues 418-428 (PRKDEEGREVE). Positions 429–491 (IDGSDADGEE…DDDDEDEEED (63 aa)) are enriched in acidic residues.

It is found in the plastid. Its subcellular location is the chloroplast. Functionally, RNA-binding protein involved in group II intron splicing. Binds specific group II introns and promotes their splicing. Functions in the context of a heterodimer with the ribonuclease III domain-containing protein RNC1. The sequence is that of Protein WHAT'S THIS FACTOR 1 homolog, chloroplastic from Arabidopsis thaliana (Mouse-ear cress).